The sequence spans 199 residues: Recombination protein RecR (199 aa).

Residues 57–72 (CAECRTFTEEEVCHIC) form a C4-type zinc finger. The 96-residue stretch at 81–176 (GQICVVESPA…EASRIAHGVP (96 aa)) folds into the Toprim domain.

This sequence belongs to the RecR family.

Functionally, may play a role in DNA repair. It seems to be involved in an RecBC-independent recombinational process of DNA repair. It may act with RecF and RecO. The chain is Recombination protein RecR from Vibrio parahaemolyticus serotype O3:K6 (strain RIMD 2210633).